Consider the following 216-residue polypeptide: Urease accessory protein UreG (216 aa).

25–32 contributes to the GTP binding site; that stretch reads GPVGSGKT.

It belongs to the SIMIBI class G3E GTPase family. UreG subfamily. As to quaternary structure, homodimer. UreD, UreF and UreG form a complex that acts as a GTP-hydrolysis-dependent molecular chaperone, activating the urease apoprotein by helping to assemble the nickel containing metallocenter of UreC. The UreE protein probably delivers the nickel.

The protein localises to the cytoplasm. In terms of biological role, facilitates the functional incorporation of the urease nickel metallocenter. This process requires GTP hydrolysis, probably effectuated by UreG. In Burkholderia thailandensis (strain ATCC 700388 / DSM 13276 / CCUG 48851 / CIP 106301 / E264), this protein is Urease accessory protein UreG.